We begin with the raw amino-acid sequence, 193 residues long: Acyl carrier protein phosphodiesterase (193 aa).

The protein belongs to the AcpH family.

It carries out the reaction holo-[ACP] + H2O = apo-[ACP] + (R)-4'-phosphopantetheine + H(+). In terms of biological role, converts holo-ACP to apo-ACP by hydrolytic cleavage of the phosphopantetheine prosthetic group from ACP. This Salmonella paratyphi A (strain ATCC 9150 / SARB42) protein is Acyl carrier protein phosphodiesterase.